An 872-amino-acid chain; its full sequence is F-box protein pof6 (872 aa).

The F-box domain occupies 30–75; it reads FGCLTINIYLKIFTLISTPDLCNCRLVCRKFQQLCDYNSIYVKKLL. A disordered region spans residues 101 to 122; sequence MSSNTSKGFHLQSSDKKYADSD. The segment covering 113 to 122 has biased composition (basic and acidic residues); that stretch reads SSDKKYADSD.

Interacts with skp1. Forms a complex with pof6 and skp1.

The protein resides in the cytoplasm. The protein localises to the nucleus. Functionally, together with skp1, essential for septum processing and cell separation. This is F-box protein pof6 (pof6) from Schizosaccharomyces pombe (strain 972 / ATCC 24843) (Fission yeast).